A 236-amino-acid polypeptide reads, in one-letter code: Phosphoribosylaminoimidazole-succinocarboxamide synthase (236 aa).

Belongs to the SAICAR synthetase family.

The enzyme catalyses 5-amino-1-(5-phospho-D-ribosyl)imidazole-4-carboxylate + L-aspartate + ATP = (2S)-2-[5-amino-1-(5-phospho-beta-D-ribosyl)imidazole-4-carboxamido]succinate + ADP + phosphate + 2 H(+). Its pathway is purine metabolism; IMP biosynthesis via de novo pathway; 5-amino-1-(5-phospho-D-ribosyl)imidazole-4-carboxamide from 5-amino-1-(5-phospho-D-ribosyl)imidazole-4-carboxylate: step 1/2. In Chlorobium phaeobacteroides (strain DSM 266 / SMG 266 / 2430), this protein is Phosphoribosylaminoimidazole-succinocarboxamide synthase.